The sequence spans 645 residues: MTKLQEMVTFRDVAVVFSEEELGLLDAAQRKLYHDVMLENFRNLLAVGCQSPNKMAPLDTTGIRCLPLGQLPCWQMTSHDVNKLARAPEDGINTPGKGPHLLEQCHSSCHWGAEQPSQAPEDDGCLENLPSNHSSSSDNQEFLSGRAQSSWSKAHFSERWNHEKHCPQTLVKTKSQLLAPGVNILGCISHHDHNILHKRDKVPSSGDCDQVIFPMTLLTQHCVYREQKAYQCSRGQEVFSDSPSLELHQQTLLGKKSPVHSTHKDTRHSPSVPIQPSVHPGRKRYWCHECGKGFRQSSALQTHQRVHTGEKPYRCDSCGKGFSRSSDLNIHRRVHTGEKPYKCEVCGKGFTQWAHLQAHERIHTGEKPYKCGDCGKRFSCSSNLHTHQRVHTEEKPYECNECGKRFSLSGNLDIHQRVHTGEKPYKCEECGKGFSSASSFQSHQRVHTGEKPFHCSVCGKNFSRSSHFLDHQRIHTGEKPYRCEVCGKRFPWSLSLHSHQSVHTGKKPYKCGECGKGFSHASSLQAHHSVHTGEKPFKCNVCQKQFSKTSNLQAHQRVHTGEKPYKCDTCGKAFSQKSSLQVHQRIHTGEKPFKCEECGKEFRWSVGLSSHQRVHTGEKPYTCQQCGKGFSQASYFHMHQRVHTI.

The region spanning 8 to 86 (VTFRDVAVVF…TSHDVNKLAR (79 aa)) is the KRAB domain. Disordered stretches follow at residues 112 to 144 (GAEQPSQAPEDDGCLENLPSNHSSSSDNQEFLS) and 255 to 280 (KKSPVHSTHKDTRHSPSVPIQPSVHP). The segment covering 129-144 (LPSNHSSSSDNQEFLS) has biased composition (polar residues). C2H2-type zinc fingers lie at residues 285-307 (YWCHECGKGFRQSSALQTHQRVH), 313-335 (YRCDSCGKGFSRSSDLNIHRRVH), 341-363 (YKCEVCGKGFTQWAHLQAHERIH), 369-391 (YKCGDCGKRFSCSSNLHTHQRVH), 397-419 (YECNECGKRFSLSGNLDIHQRVH), 425-447 (YKCEECGKGFSSASSFQSHQRVH), 453-475 (FHCSVCGKNFSRSSHFLDHQRIH), 481-503 (YRCEVCGKRFPWSLSLHSHQSVH), 509-531 (YKCGECGKGFSHASSLQAHHSVH), 537-559 (FKCNVCQKQFSKTSNLQAHQRVH), 565-587 (YKCDTCGKAFSQKSSLQVHQRIH), 593-615 (FKCEECGKEFRWSVGLSSHQRVH), and 621-643 (YTCQQCGKGFSQASYFHMHQRVH).

The protein belongs to the krueppel C2H2-type zinc-finger protein family.

The protein localises to the nucleus. Functionally, may be involved in transcriptional regulation. This Mus musculus (Mouse) protein is Zinc finger protein 235 (Znf235).